The sequence spans 732 residues: Adducin-related protein 1 (732 aa).

2 disordered regions span residues 1–22 (MIGRKEKERERPYYRDPDDPEY) and 684–732 (TRFS…KKDK). Polar residues predominate over residues 685–705 (RFSSTQGTSEGNTTSRSCTTA). Residues 716 to 732 (KKKKKKGFLSFMRKKDK) are compositionally biased toward basic residues.

It belongs to the aldolase class II family. Adducin subfamily.

It localises to the cytoplasm. It is found in the cytoskeleton. Its subcellular location is the cell membrane. Membrane-cytoskeleton-associated protein that promotes the assembly of the spectrin-actin network. Plays a role in time-dependent memmory loss and the retention of conditioned behavior over time. The polypeptide is Adducin-related protein 1 (Caenorhabditis elegans).